A 266-amino-acid polypeptide reads, in one-letter code: Aspartate/glutamate leucyltransferase (266 aa).

This sequence belongs to the R-transferase family. Bpt subfamily.

Its subcellular location is the cytoplasm. It catalyses the reaction N-terminal L-glutamyl-[protein] + L-leucyl-tRNA(Leu) = N-terminal L-leucyl-L-glutamyl-[protein] + tRNA(Leu) + H(+). The enzyme catalyses N-terminal L-aspartyl-[protein] + L-leucyl-tRNA(Leu) = N-terminal L-leucyl-L-aspartyl-[protein] + tRNA(Leu) + H(+). Its function is as follows. Functions in the N-end rule pathway of protein degradation where it conjugates Leu from its aminoacyl-tRNA to the N-termini of proteins containing an N-terminal aspartate or glutamate. In Rhizorhabdus wittichii (strain DSM 6014 / CCUG 31198 / JCM 15750 / NBRC 105917 / EY 4224 / RW1) (Sphingomonas wittichii), this protein is Aspartate/glutamate leucyltransferase.